The primary structure comprises 65 residues: Large ribosomal subunit protein bL35 (65 aa).

The protein belongs to the bacterial ribosomal protein bL35 family.

This is Large ribosomal subunit protein bL35 from Sorangium cellulosum (strain So ce56) (Polyangium cellulosum (strain So ce56)).